We begin with the raw amino-acid sequence, 291 residues long: Formamidopyrimidine-DNA glycosylase (291 aa).

Proline 2 serves as the catalytic Schiff-base intermediate with DNA. The active-site Proton donor is glutamate 3. Catalysis depends on lysine 61, which acts as the Proton donor; for beta-elimination activity. DNA is bound by residues histidine 103, arginine 123, and arginine 165. The segment at 251 to 285 (EVYGRGGQACSRCASTIRRDAFMNRSSFSCPACQP) adopts an FPG-type zinc-finger fold. The active-site Proton donor; for delta-elimination activity is the arginine 275.

The protein belongs to the FPG family. In terms of assembly, monomer. Zn(2+) is required as a cofactor.

The enzyme catalyses Hydrolysis of DNA containing ring-opened 7-methylguanine residues, releasing 2,6-diamino-4-hydroxy-5-(N-methyl)formamidopyrimidine.. It catalyses the reaction 2'-deoxyribonucleotide-(2'-deoxyribose 5'-phosphate)-2'-deoxyribonucleotide-DNA = a 3'-end 2'-deoxyribonucleotide-(2,3-dehydro-2,3-deoxyribose 5'-phosphate)-DNA + a 5'-end 5'-phospho-2'-deoxyribonucleoside-DNA + H(+). Involved in base excision repair of DNA damaged by oxidation or by mutagenic agents. Acts as a DNA glycosylase that recognizes and removes damaged bases. Has a preference for oxidized purines, such as 7,8-dihydro-8-oxoguanine (8-oxoG). Has AP (apurinic/apyrimidinic) lyase activity and introduces nicks in the DNA strand. Cleaves the DNA backbone by beta-delta elimination to generate a single-strand break at the site of the removed base with both 3'- and 5'-phosphates. The polypeptide is Formamidopyrimidine-DNA glycosylase (Parafrankia sp. (strain EAN1pec)).